The primary structure comprises 172 residues: Shikimate kinase (172 aa).

11–16 (GAGKST) contributes to the ATP binding site. Mg(2+) is bound at residue Ser-15. 3 residues coordinate substrate: Asp-33, Arg-57, and Gly-79. Arg-117 is a binding site for ATP. Substrate is bound at residue Arg-136. Arg-153 provides a ligand contact to ATP.

Belongs to the shikimate kinase family. Monomer. Mg(2+) serves as cofactor.

It is found in the cytoplasm. It carries out the reaction shikimate + ATP = 3-phosphoshikimate + ADP + H(+). Its pathway is metabolic intermediate biosynthesis; chorismate biosynthesis; chorismate from D-erythrose 4-phosphate and phosphoenolpyruvate: step 5/7. Its function is as follows. Catalyzes the specific phosphorylation of the 3-hydroxyl group of shikimic acid using ATP as a cosubstrate. The sequence is that of Shikimate kinase from Pseudomonas putida (strain ATCC 700007 / DSM 6899 / JCM 31910 / BCRC 17059 / LMG 24140 / F1).